Reading from the N-terminus, the 354-residue chain is Guanine nucleotide-binding protein alpha-12 subunit (354 aa).

The G-alpha domain maps to 31-354 (QPLKLLLLGS…SLLMNVAEIL (324 aa)). Positions 34-47 (KLLLLGSGECGKST) are G1 motif. GTP contacts are provided by residues 39–46 (GSGECGKS), 178–184 (LRVRVKT), 203–207 (DVGGQ), 272–275 (NKID), and A329. 2 residues coordinate Mg(2+): S46 and T184. A G2 motif region spans residues 176-184 (DFLRVRVKT). A G3 motif region spans residues 199–208 (FKLVDVGGQK). Residues 268–275 (VLFFNKID) form a G4 motif region. The interval 327-332 (TCALDS) is G5 motif.

This sequence belongs to the G-alpha family. In terms of assembly, g proteins are composed of 3 units; alpha, beta and gamma. The alpha chain contains the guanine nucleotide binding site.

Functionally, guanine nucleotide-binding proteins (G proteins) are involved as modulators or transducers in various transmembrane signaling systems. This is Guanine nucleotide-binding protein alpha-12 subunit (gpaL) from Dictyostelium discoideum (Social amoeba).